The sequence spans 119 residues: UPF0342 protein Athe_0692 (119 aa).

This sequence belongs to the UPF0342 family.

This chain is UPF0342 protein Athe_0692, found in Caldicellulosiruptor bescii (strain ATCC BAA-1888 / DSM 6725 / KCTC 15123 / Z-1320) (Anaerocellum thermophilum).